We begin with the raw amino-acid sequence, 372 residues long: L-selectin (372 aa).

The N-terminal stretch at 1-28 is a signal peptide; sequence MIFPRKCQSTQRDLWNIFKLWGWTMLCC. A propeptide spanning residues 29–38 is cleaved from the precursor; that stretch reads DFLAHHGTDC. At 39-332 the chain is on the extracellular side; the sequence is WTYHYSENPM…FSMIKEGDYN (294 aa). The 101-residue stretch at 55–155 folds into the C-type lectin domain; it reads RFCRENYTDL…ACHKPKAALC (101 aa). 10 disulfides stabilise this stretch: Cys-57–Cys-155, Cys-128–Cys-147, Cys-128–Cys-160, Cys-160–Cys-171, Cys-165–Cys-180, Cys-182–Cys-191, Cys-197–Cys-241, Cys-227–Cys-254, Cys-259–Cys-303, and Cys-289–Cys-316. N-linked (GlcNAc...) asparagine glycans are attached at residues Asn-60 and Asn-104. Ca(2+)-binding residues include Glu-118, Asn-120, Glu-126, Asn-143, and Asp-144. Residues 156 to 192 enclose the EGF-like domain; sequence YTASCQPWSCSGHGECVEIINNYTCNCDVGYYGPQCQ. Asn-177 is a glycosylation site (N-linked (GlcNAc...) asparagine). Sushi domains lie at 195-256 and 257-318; these read IQCE…TCQV and IQCE…ICQK. N-linked (GlcNAc...) asparagine glycans are attached at residues Asn-226, Asn-232, Asn-246, and Asn-271. The helical transmembrane segment at 333–355 threads the bilayer; it reads PLFIPVAVMVTAFSGLAFIIWLA. At 356–372 the chain is on the cytoplasmic side; sequence RRLKKGKKSKKSMDDPY.

The protein belongs to the selectin/LECAM family. Interaction with SELPLG/PSGL1 and PODXL2 is required for promoting recruitment and rolling of leukocytes. This interaction is dependent on the sialyl Lewis X glycan modification of SELPLG and PODXL2, and tyrosine sulfation modifications of SELPLG. Sulfation on 'Tyr-51' of SELPLG is important for L-selectin binding. Post-translationally, N-glycosylated.

It localises to the cell membrane. Functionally, calcium-dependent lectin that mediates cell adhesion by binding to glycoproteins on neighboring cells. Mediates the adherence of lymphocytes to endothelial cells of high endothelial venules in peripheral lymph nodes. Promotes initial tethering and rolling of leukocytes in endothelia. In Macaca mulatta (Rhesus macaque), this protein is L-selectin (SELL).